The chain runs to 395 residues: Serine-type anaerobic sulfatase-maturating enzyme (395 aa).

One can recognise a Radical SAM core domain in the interval 18–249; sequence PRSPVPFHIL…QWRKRCDRGR (232 aa). C35 and C39 together coordinate [4Fe-4S] cluster. Residue Y41 participates in S-adenosyl-L-methionine binding. C42 is a [4Fe-4S] cluster binding site. The S-adenosyl-L-methionine site is built by G84 and R152. [4Fe-4S] cluster-binding residues include C270, C276, and C291. The Proton acceptor role is filled by D292. Residues C331, C334, C340, C344, and C357 each contribute to the [4Fe-4S] cluster site.

Belongs to the radical SAM superfamily. Anaerobic sulfatase-maturating enzyme family. As to quaternary structure, monomer. Interacts with AtsA prior to its export to the periplasm. This interaction depends on the presence of AtsA 'Ser-72'. Binding of SAM to AtsB promotes the formation of a ternary AtsA-AtsB-SAM complex. Requires [4Fe-4S] cluster as cofactor.

The protein resides in the cytoplasm. It carries out the reaction L-seryl-[sulfatase] + S-adenosyl-L-methionine = 3-oxo-L-alanyl-[sulfatase] + 5'-deoxyadenosine + L-methionine + H(+). Its pathway is protein modification; sulfatase oxidation. Activity is inhibited by iron chelators. In terms of biological role, involved in 'Ser-type' sulfatase maturation under anaerobic conditions. Catalyzes the post-translational modification of serine ('Ser-72' in the arylsulfatase AtsA) into 3-oxoalanine (also known as C(alpha)-formylglycine (FGly)), by a free radical chemical mechanism initiated via the reductive cleavage of S-adenosyl-L-methionine (SAM). Is capable of catalyzing multiple turnovers. In vitro, use of a peptide substrate in which the target serine is changed to cysteine also gives rise to turnover, supporting approximately 4-fold the activity of that observed with the natural substrate. The sequence is that of Serine-type anaerobic sulfatase-maturating enzyme from Klebsiella pneumoniae.